Reading from the N-terminus, the 454-residue chain is Cell division cycle-associated 7-like protein (454 aa).

The short motif at 9-33 is the Integrase domain-binding motif 1 (IBM1) element; it reads IPKEVADIFNAPSDDEEFVGFRDDV. Residue S21 is modified to Phosphoserine. The short motif at 65–91 is the Integrase domain-binding motif 2 (IBM2) element; it reads FTEELRRIFIEDTDSETEDFAGFTQSD. T77 bears the Phosphothreonine mark. S79 bears the Phosphoserine mark. Phosphothreonine occurs at positions 81 and 88. Disordered regions lie at residues 103 to 169 and 188 to 213; these read VESD…LFSS and QVIQ…SSDA. Residues S105, S108, S117, S138, S139, S162, S195, and S197 each carry the phosphoserine modification. Positions 117 to 126 are enriched in acidic residues; that stretch reads SEEEEDEEED. Residues 213-235 form an MYC-binding region; that stretch reads ALLKRTMNIKENKAMLAQLLAEL. Glycyl lysine isopeptide (Lys-Gly) (interchain with G-Cter in SUMO2) cross-links involve residues K222 and K225. S261 carries the phosphoserine modification.

In terms of assembly, interacts with MYC. Interacts (via IBM motifs) with PSIP1 (via IBD domain); phosphorylation increases its affinity for PSIP1. Post-translationally, phosphorylation increases its interaction with PSIP1. Ubiquitous. Overexpressed in medulloblastoma.

Its subcellular location is the cytoplasm. The protein localises to the nucleus. Functionally, plays a role in transcriptional regulation as a repressor that inhibits monoamine oxidase A (MAOA) activity and gene expression by binding to the promoter. Plays an important oncogenic role in mediating the full transforming effect of MYC in medulloblastoma cells. Involved in apoptotic signaling pathways; May act downstream of P38-kinase and BCL-2, but upstream of CASP3/caspase-3 as well as CCND1/cyclin D1 and E2F1. This chain is Cell division cycle-associated 7-like protein (CDCA7L), found in Homo sapiens (Human).